A 336-amino-acid polypeptide reads, in one-letter code: Dihydroorotate dehydrogenase (quinone) (336 aa).

FMN-binding positions include 62-66 and Thr-86; that span reads AGLDK. Lys-66 provides a ligand contact to substrate. 111–115 contacts substrate; it reads NRMGF. Residues Asn-139 and Asn-172 each coordinate FMN. Asn-172 serves as a coordination point for substrate. Ser-175 serves as the catalytic Nucleophile. Asn-177 is a substrate binding site. Positions 217 and 245 each coordinate FMN. 246–247 contacts substrate; it reads NT. FMN is bound by residues Gly-268, Gly-297, and 318-319; that span reads YS.

The protein belongs to the dihydroorotate dehydrogenase family. Type 2 subfamily. Monomer. Requires FMN as cofactor.

The protein localises to the cell membrane. The enzyme catalyses (S)-dihydroorotate + a quinone = orotate + a quinol. It functions in the pathway pyrimidine metabolism; UMP biosynthesis via de novo pathway; orotate from (S)-dihydroorotate (quinone route): step 1/1. Catalyzes the conversion of dihydroorotate to orotate with quinone as electron acceptor. The polypeptide is Dihydroorotate dehydrogenase (quinone) (Aeromonas hydrophila subsp. hydrophila (strain ATCC 7966 / DSM 30187 / BCRC 13018 / CCUG 14551 / JCM 1027 / KCTC 2358 / NCIMB 9240 / NCTC 8049)).